The following is a 178-amino-acid chain: ATP synthase subunit b, chloroplastic (178 aa).

Residues 23-43 (IFETNIINLAAVVAIVISFVG) traverse the membrane as a helical segment.

The protein belongs to the ATPase B chain family. F-type ATPases have 2 components, F(1) - the catalytic core - and F(0) - the membrane proton channel. F(1) has five subunits: alpha(3), beta(3), gamma(1), delta(1), epsilon(1). F(0) has four main subunits: a(1), b(1), b'(1) and c(10-14). The alpha and beta chains form an alternating ring which encloses part of the gamma chain. F(1) is attached to F(0) by a central stalk formed by the gamma and epsilon chains, while a peripheral stalk is formed by the delta, b and b' chains.

The protein resides in the plastid. Its subcellular location is the chloroplast thylakoid membrane. Functionally, f(1)F(0) ATP synthase produces ATP from ADP in the presence of a proton or sodium gradient. F-type ATPases consist of two structural domains, F(1) containing the extramembraneous catalytic core and F(0) containing the membrane proton channel, linked together by a central stalk and a peripheral stalk. During catalysis, ATP synthesis in the catalytic domain of F(1) is coupled via a rotary mechanism of the central stalk subunits to proton translocation. Its function is as follows. Component of the F(0) channel, it forms part of the peripheral stalk, linking F(1) to F(0). The polypeptide is ATP synthase subunit b, chloroplastic (Tetradesmus obliquus (Green alga)).